A 339-amino-acid polypeptide reads, in one-letter code: Probable G-protein coupled receptor 33 (339 aa).

The Extracellular segment spans residues 1–30; that stretch reads MDLINSSTHVINVSTSLTNSTGVPTPAPKT. N-linked (GlcNAc...) asparagine glycans are attached at residues Asn-5, Asn-12, and Asn-19. The chain crosses the membrane as a helical span at residues 31-53; the sequence is IIAASLFMAFIIGVISNGLYLWM. Residues 54–64 are Cytoplasmic-facing; the sequence is LQFKMQRTVNT. The chain crosses the membrane as a helical span at residues 65–86; that stretch reads LLFFHLILSYFISTLILPFMAT. Over 87–103 the chain is Extracellular; it reads SFLQDNHWVFGSVLCKA. Cys-101 and Cys-179 form a disulfide bridge. A helical membrane pass occupies residues 104-124; it reads FNSTLSVSMFASVFFLSAISV. The Cytoplasmic segment spans residues 125–143; sequence ARYYLILHPVWSQQHRTPH. The chain crosses the membrane as a helical span at residues 144–165; that stretch reads WASRIALQIWISATILSIPYLV. Residues 166–209 are Extracellular-facing; the sequence is FRTTHDDHKGRIKCQNNYIVSTDWESKEHQTLGQWIHAACFVGR. Residues 210–230 traverse the membrane as a helical segment; the sequence is FLLGFLLPFLVIIFCYKRVAT. Topologically, residues 231–246 are cytoplasmic; sequence KMKEKGLFKSSKPFKV. Residues 247 to 268 traverse the membrane as a helical segment; that stretch reads MVTAVISFFVCWMPYHVHSGLV. Over 269 to 283 the chain is Extracellular; the sequence is LTKSQPLPLHLTLGL. The helical transmembrane segment at 284–303 threads the bilayer; the sequence is AVVTISFNTVVSPVLYLFTG. The Cytoplasmic segment spans residues 304–339; the sequence is ENFKVFKKSILALFNSTFSDISSTERTQTLNSETEI.

It belongs to the G-protein coupled receptor 1 family. As to expression, expressed predominantly in lung, spleen and testis.

Its subcellular location is the cell membrane. Its function is as follows. Orphan receptor; could be a chemoattractant receptor. In Mus musculus (Mouse), this protein is Probable G-protein coupled receptor 33 (Gpr33).